Consider the following 221-residue polypeptide: Ependymin-2 (221 aa).

The N-terminal stretch at 1-21 is a signal peptide; it reads MQDFAFAALSIWLCLGATALA. N-linked (GlcNAc...) asparagine glycosylation is found at asparagine 33, asparagine 73, and asparagine 97.

Belongs to the ependymin family. Post-translationally, binds calcium through the terminal sialic acids. In terms of tissue distribution, EPDs are synthesized in the meninx and secreted in the cerebrospinal fluid.

It localises to the secreted. In terms of biological role, may play a role in neural plasticity. May be involved during axon regeneration. The chain is Ependymin-2 (epd2) from Oncorhynchus mykiss (Rainbow trout).